A 271-amino-acid polypeptide reads, in one-letter code: Phosphatidylglycerol--prolipoprotein diacylglyceryl transferase (271 aa).

7 consecutive transmembrane segments (helical) span residues I21–A41, L60–Y80, V95–W115, F124–L144, S176–I196, G203–V223, and L230–G250. Position 143 (R143) interacts with a 1,2-diacyl-sn-glycero-3-phospho-(1'-sn-glycerol).

The protein belongs to the Lgt family.

The protein localises to the cell inner membrane. It catalyses the reaction L-cysteinyl-[prolipoprotein] + a 1,2-diacyl-sn-glycero-3-phospho-(1'-sn-glycerol) = an S-1,2-diacyl-sn-glyceryl-L-cysteinyl-[prolipoprotein] + sn-glycerol 1-phosphate + H(+). The protein operates within protein modification; lipoprotein biosynthesis (diacylglyceryl transfer). In terms of biological role, catalyzes the transfer of the diacylglyceryl group from phosphatidylglycerol to the sulfhydryl group of the N-terminal cysteine of a prolipoprotein, the first step in the formation of mature lipoproteins. This chain is Phosphatidylglycerol--prolipoprotein diacylglyceryl transferase, found in Vibrio vulnificus (strain CMCP6).